The sequence spans 138 residues: Odorant-binding protein 22 (138 aa).

An N-terminal signal peptide occupies residues 1-16 (MKVFIAVFALIAVAAA). Position 30 (arginine 30) interacts with (5Z,8Z,11Z,14Z)-eicosatetraenoate. (9Z)-hexadecenoate is bound by residues arginine 30 and tyrosine 61. Arginine 30 and tyrosine 61 together coordinate (9Z,12Z)-octadecadienoate. Cystine bridges form between cysteine 33/cysteine 64, cysteine 60/cysteine 113, and cysteine 103/cysteine 122. N-linked (GlcNAc...) asparagine glycosylation occurs at asparagine 127.

It belongs to the PBP/GOBP family. Monomer in solution. As to expression, high-level expression in female mouth parts, particularly in the proboscis (at protein level). Moderate-level expression in female antenna (at protein level). Expressed in testis but not in the accessory gland or ejaculatory duct (at protein level). Expressed in spermathecae (at protein level). Female salivary gland. Female chemosensory organs: antenna, palp and proboscis. Not detected in midgut.

The protein resides in the secreted. Involved in modulation of blood-feeding behavior and capacity in female mosquitoes. Required for normal oviposition. Required for normal fecundity and fertility of female and male mosquitoes. Required for normal expression of VGA1 gene, which encodes the egg yolk protein vitellogenin-A1. Involved in regulation of spermatozoa development. Required for normal female longevity when mosquitoes are maintained on regular sugar meal. Binds long chain fatty acids. Functionally, (Microbial infection) Facilitates shedding of dengue virus type 2 particles into mosquito saliva. Does not affect dengue virus type 2 replication or infection prevalence in midgut and salivary glands at 14 days after blood feeding. In terms of biological role, (Microbial infection) Facilitates shedding of Zika virus particles into mosquito saliva. Does not affect Zika virus replication or infection prevalence in midgut and salivary glands at 14 days after blood feeding. This chain is Odorant-binding protein 22, found in Aedes aegypti (Yellowfever mosquito).